We begin with the raw amino-acid sequence, 136 residues long: Large ribosomal subunit protein uL16 (136 aa).

It belongs to the universal ribosomal protein uL16 family. Part of the 50S ribosomal subunit.

Binds 23S rRNA and is also seen to make contacts with the A and possibly P site tRNAs. The chain is Large ribosomal subunit protein uL16 from Salmonella agona (strain SL483).